A 546-amino-acid chain; its full sequence is Chaperonin GroEL 1 (546 aa).

ATP is bound by residues 30–33 (TLGP), lysine 51, 87–91 (DGTTT), glycine 415, 479–481 (NAA), and aspartate 495. A disordered region spans residues 526–546 (KEDAPMPGGMPGGMGGMGMDM). Positions 534–546 (GMPGGMGGMGMDM) are enriched in gly residues.

It belongs to the chaperonin (HSP60) family. Forms a cylinder of 14 subunits composed of two heptameric rings stacked back-to-back. Interacts with the co-chaperonin GroES.

It localises to the cytoplasm. The enzyme catalyses ATP + H2O + a folded polypeptide = ADP + phosphate + an unfolded polypeptide.. Functionally, together with its co-chaperonin GroES, plays an essential role in assisting protein folding. The GroEL-GroES system forms a nano-cage that allows encapsulation of the non-native substrate proteins and provides a physical environment optimized to promote and accelerate protein folding. The sequence is that of Chaperonin GroEL 1 from Burkholderia cenocepacia (strain HI2424).